A 486-amino-acid polypeptide reads, in one-letter code: F420-non-reducing hydrogenase iron-sulfur subunit A (486 aa).

The Ni(2+) site is built by Cys61 and Cys64.

This sequence belongs to the [NiFe]/[NiFeSe] hydrogenase large subunit family. The F420-non-reducing hydrogenase is composed of three subunits; MvhA, MvhD and MvhG. It forms a complex with the heterodisulfide reductase (Hdr). It depends on Ni(2+) as a cofactor.

It is found in the cytoplasm. Functionally, part of a complex that provides reducing equivalents for heterodisulfide reductase. This chain is F420-non-reducing hydrogenase iron-sulfur subunit A (mvhA), found in Archaeoglobus profundus (strain DSM 5631 / JCM 9629 / NBRC 100127 / Av18).